We begin with the raw amino-acid sequence, 397 residues long: Proteinase-activated receptor 2 (397 aa).

An N-terminal signal peptide occupies residues 1–25 (MRSPSAAWLLGAAILLAASLSCSGT). Positions 26–36 (IQGTNRSSKGR) are cleaved as a propeptide — removed for receptor activation. N30 carries an N-linked (GlcNAc...) asparagine glycan. Over 37–71 (SLIGKVDGTSHVTGKGVTVETVFSVDEFSASVLTG) the chain is Extracellular. A helical transmembrane segment spans residues 72–101 (KLTTVFLPIVYTIVFVVGLPSNGMALWVFL). The Cytoplasmic portion of the chain corresponds to 102 to 108 (FRTKKKH). The helical transmembrane segment at 109 to 137 (PAVIYMANLALADLLSVIWFPLKIAYHIH) threads the bilayer. At 138–149 (GNNWIYGEALCN) the chain is on the extracellular side. A disulfide bridge links C148 with C226. A helical transmembrane segment spans residues 150-177 (VLIGFFYGNMYCSILFMTCLSVQRYWVI). At 178–183 (VNPMGH) the chain is on the cytoplasmic side. A helical membrane pass occupies residues 184 to 211 (SRKKANIAIGISLAIWLLILLVTIPLYV). The Extracellular segment spans residues 212–235 (VKQTIFIPALNITTCHDVLPEQLL). Residue N222 is glycosylated (N-linked (GlcNAc...) asparagine). Residues 236-269 (VGDMFNYFLSLAIGVFLFPAFLTASAYVLMIRML) traverse the membrane as a helical segment. Residues 270–277 (RSSAMDEN) lie on the Cytoplasmic side of the membrane. The helical transmembrane segment at 278–317 (SEKKRKRAIKLIVTVLAMYLICFTPSNLLLVVHYFLIKSQ) threads the bilayer. Topologically, residues 318–323 (GQSHVY) are extracellular. A helical transmembrane segment spans residues 324–347 (ALYIVALCLSTLNSCIDPFVYYFV). The Cytoplasmic portion of the chain corresponds to 348–397 (SHDFRDHAKNALLCRSVRTVKQMQVSLTSKKHSRKSSSYSSSSTTVKTSY). Residue C361 is the site of S-palmitoyl cysteine attachment. Positions 373 to 397 (SLTSKKHSRKSSSYSSSSTTVKTSY) are disordered. Residues 383 to 397 (SSSYSSSSTTVKTSY) show a composition bias toward low complexity.

This sequence belongs to the G-protein coupled receptor 1 family. Interacts with TLR4, COPS5 and TMED2. Interacts with GNAQ, GNA11, GNA12, GNA13 and GNA14. A proteolytic cleavage generates a new N-terminus that functions as a tethered ligand. Activating serine proteases include trypsin, mast cell tryptase, coagulation factors VII and Xa, myeloblastin/PRTN3 and membrane-type serine protease 1/ST14. Subsequent cleavage by serine proteases, including neutrophil elastase and cathepsin G, leads to receptor deactivation. At least in part, implicated proteases are also shown to activate the receptor; the glycosylation status of the receptor is thought to contribute to the difference. In addition to conventional trypsin-like proteases activated by other proteases and glycosidases derived from bacteria, fungi and insects. Activated by serine protease allergens such as dust mite Der p3 and Der p9 and mold Pen c13. Activated by P.gingivalis arginine-specific (trypsin-like) cysteine proteinases called gingipains. Activated by S.griseus exogenous chitinase. Activated by A.alternata aspartate protease; the cleavage generates non-conventional processed forms. Proteolytically cleaved by coagulation factor Xa (F10); cleavage results in activation of F2RL1-dependent signaling. Post-translationally, N-glycosylated and sialylated. In terms of processing, multiple phosphorylated on serine and threonine residues in the cytoplasmic region upon receptor activation; required for receptor desensitization and recruitment of beta-arrestin. Monoubiquitinated by CBL at the plasma membrane and in early endosomes; not required for receptor endocytosis but for translocation to late endosomes or lysosomes. Deubiquitination involves STAMBP and USP8; required for lysosomal trafficking and receptor degradation. In terms of tissue distribution, widely expressed in tissues with especially high levels in pancreas, liver, kidney, small intestine, and colon. Moderate expression is detected in many organs, but none in brain or skeletal muscle. Expressed in endothelial cells.

The protein localises to the cell membrane. Its activity is regulated as follows. Activated upon interaction by mucunain, a cowhage (Mucuna pruriens) plant cysteine proteinase. In terms of biological role, receptor for trypsin and trypsin-like enzymes coupled to G proteins. Its function is mediated through the activation of several signaling pathways including phospholipase C (PLC), intracellular calcium, mitogen-activated protein kinase (MAPK), I-kappaB kinase/NF-kappaB and Rho. Can also be transactivated by cleaved F2R/PAR1. Involved in modulation of inflammatory responses and regulation of innate and adaptive immunity, and acts as a sensor for proteolytic enzymes generated during infection. Generally is promoting inflammation. Can signal synergistically with TLR4 and probably TLR2 in inflammatory responses and modulates TLR3 signaling. Has a protective role in establishing the endothelial barrier; the activity involves coagulation factor X. Regulates endothelial cell barrier integrity during neutrophil extravasation, probably following proteolytic cleavage by PRTN3. Proposed to have a bronchoprotective role in airway epithelium, but also shown to compromise the airway epithelial barrier by interrupting E-cadherin adhesion. Involved in the regulation of vascular tone; activation results in hypotension presumably mediated by vasodilation. Associates with a subset of G proteins alpha subunits such as GNAQ, GNA11, GNA14, GNA12 and GNA13, but probably not with G(o)-alpha, G(i) subunit alpha-1 and G(i) subunit alpha-2. However, according to PubMed:21627585 can signal through G(i) subunit alpha. Believed to be a class B receptor which internalizes as a complex with arrestin and traffic with it to endosomal vesicles, presumably as desensitized receptor, for extended periods of time. Mediates inhibition of TNF-alpha stimulated JNK phosphorylation via coupling to GNAQ and GNA11; the function involves dissociation of RIPK1 and TRADD from TNFR1. Mediates phosphorylation of nuclear factor NF-kappa-B RELA subunit at 'Ser-536'; the function involves IKBKB and is predominantly independent of G proteins. Involved in cellular migration. Involved in cytoskeletal rearrangement and chemotaxis through beta-arrestin-promoted scaffolds; the function is independent of GNAQ and GNA11 and involves promotion of cofilin dephosphorylation and actin filament severing. Induces redistribution of COPS5 from the plasma membrane to the cytosol and activation of the JNK cascade is mediated by COPS5. Involved in the recruitment of leukocytes to the sites of inflammation and is the major PAR receptor capable of modulating eosinophil function such as pro-inflammatory cytokine secretion, superoxide production and degranulation. During inflammation promotes dendritic cell maturation, trafficking to the lymph nodes and subsequent T-cell activation. Involved in antimicrobial response of innate immune cells; activation enhances phagocytosis of Gram-positive and killing of Gram-negative bacteria. Acts synergistically with interferon-gamma in enhancing antiviral responses. Implicated in a number of acute and chronic inflammatory diseases such as of the joints, lungs, brain, gastrointestinal tract, periodontium, skin, and vascular systems, and in autoimmune disorders. Probably mediates activation of pro-inflammatory and pro-fibrotic responses in fibroblasts, triggered by coagulation factor Xa (F10). Mediates activation of barrier protective signaling responses in endothelial cells, triggered by coagulation factor Xa (F10). The chain is Proteinase-activated receptor 2 (F2RL1) from Homo sapiens (Human).